Here is a 1064-residue protein sequence, read N- to C-terminus: Importin-13 homolog A (1064 aa).

In terms of domain architecture, Importin N-terminal spans Ala40–Thr109. 2 disordered regions span residues Thr695 to Asn722 and Asn839 to Asn860. Over residues Asn700 to Asn722 the composition is skewed to low complexity.

Belongs to the importin beta family. Forms a complex with an importin alpha subunit.

It localises to the cytoplasm. The protein resides in the nucleus envelope. In terms of biological role, required for nuclear protein import and mediates docking of import substrate to distinct nucleoporins. This chain is Importin-13 homolog A (ipo13A), found in Dictyostelium discoideum (Social amoeba).